A 287-amino-acid polypeptide reads, in one-letter code: Isopentenyl-diphosphate Delta-isomerase 1, chloroplastic (287 aa).

The transit peptide at 1 to 51 (MTLLLNTTAKLYIAPRTLPFTSSSTFARSPFLRIPSLLKPLSPLTARVSLS) directs the protein to the chloroplast. Residue Lys-90 coordinates substrate. 2 residues coordinate Mg(2+): His-94 and His-106. In terms of domain architecture, Nudix hydrolase spans 104–256 (LLHRAFSVFL…GLKLSPWFRL (153 aa)). Residues Arg-125 and Lys-129 each coordinate substrate. The active site involves Cys-141. Ser-142 lines the substrate pocket. Positions 142–172 (SHPLYRESELIDEESLGARNAAQRKLLDELG) match the Nudix box motif. Mg(2+)-binding residues include Glu-201 and Glu-203. Glu-203 is an active-site residue.

The protein belongs to the IPP isomerase type 1 family. In terms of assembly, monomer. Mg(2+) serves as cofactor. Mainly expressed in roots and trichomes and, to a lower extent, in leaves, flowers and stems.

Its subcellular location is the plastid. The protein localises to the chloroplast. The catalysed reaction is isopentenyl diphosphate = dimethylallyl diphosphate. Its pathway is isoprenoid biosynthesis; dimethylallyl diphosphate biosynthesis; dimethylallyl diphosphate from isopentenyl diphosphate: step 1/1. It functions in the pathway porphyrin-containing compound metabolism; chlorophyll biosynthesis. In terms of biological role, catalyzes the 1,3-allylic rearrangement of the homoallylic substrate isopentenyl (IPP) to its highly electrophilic allylic isomer, dimethylallyl diphosphate (DMAPP). This is Isopentenyl-diphosphate Delta-isomerase 1, chloroplastic from Cannabis sativa (Hemp).